A 265-amino-acid polypeptide reads, in one-letter code: tRNA (guanine-N(7)-)-methyltransferase (265 aa).

A compositionally biased stretch (basic and acidic residues) spans 1 to 16 (MNHDDPNASGVPHDDA). The segment at 1–40 (MNHDDPNASGVPHDDANDAAPASASDAARATGHADDESSP) is disordered. Residues 18-31 (DAAPASASDAARAT) are compositionally biased toward low complexity. 4 residues coordinate S-adenosyl-L-methionine: Glu95, Glu120, Asp147, and Asp170. Asp170 is an active-site residue. Residues Lys174, Asp206, and 241 to 244 (TKFE) each bind substrate.

The protein belongs to the class I-like SAM-binding methyltransferase superfamily. TrmB family.

It catalyses the reaction guanosine(46) in tRNA + S-adenosyl-L-methionine = N(7)-methylguanosine(46) in tRNA + S-adenosyl-L-homocysteine. The protein operates within tRNA modification; N(7)-methylguanine-tRNA biosynthesis. In terms of biological role, catalyzes the formation of N(7)-methylguanine at position 46 (m7G46) in tRNA. This chain is tRNA (guanine-N(7)-)-methyltransferase, found in Burkholderia thailandensis (strain ATCC 700388 / DSM 13276 / CCUG 48851 / CIP 106301 / E264).